Reading from the N-terminus, the 150-residue chain is UPF0178 protein PputW619_5044 (150 aa).

It belongs to the UPF0178 family.

This Pseudomonas putida (strain W619) protein is UPF0178 protein PputW619_5044.